The sequence spans 123 residues: Putative outer membrane protein CPn_0818/CP_1053/CPj0818/CpB0847 (123 aa).

Positions 1–30 (MKRQKRKQSITLIEMMVVITLIGIIGGALA) are cleaved as a signal peptide.

The protein localises to the cell outer membrane. The protein is Putative outer membrane protein CPn_0818/CP_1053/CPj0818/CpB0847 of Chlamydia pneumoniae (Chlamydophila pneumoniae).